Here is a 162-residue protein sequence, read N- to C-terminus: NADH-quinone oxidoreductase subunit I (162 aa).

4Fe-4S ferredoxin-type domains are found at residues 54-83 (RRYENGEERCIACKLCEAVCPALAITIESE) and 93-122 (TRYDIDLTKCIFCGFCEESCPVDSIVETHI). Positions 63, 66, 69, 73, 102, 105, 108, and 112 each coordinate [4Fe-4S] cluster.

Belongs to the complex I 23 kDa subunit family. NDH-1 is composed of 14 different subunits. Subunits NuoA, H, J, K, L, M, N constitute the membrane sector of the complex. Requires [4Fe-4S] cluster as cofactor.

It localises to the cell inner membrane. It catalyses the reaction a quinone + NADH + 5 H(+)(in) = a quinol + NAD(+) + 4 H(+)(out). Its function is as follows. NDH-1 shuttles electrons from NADH, via FMN and iron-sulfur (Fe-S) centers, to quinones in the respiratory chain. The immediate electron acceptor for the enzyme in this species is believed to be ubiquinone. Couples the redox reaction to proton translocation (for every two electrons transferred, four hydrogen ions are translocated across the cytoplasmic membrane), and thus conserves the redox energy in a proton gradient. The sequence is that of NADH-quinone oxidoreductase subunit I from Paraburkholderia xenovorans (strain LB400).